We begin with the raw amino-acid sequence, 114 residues long: Probable acid stress chaperone HdeA (114 aa).

Residues 1–26 (MIKALFNKNTALAAVAILALSGGAMA) form the signal peptide. Residues cysteine 46 and cysteine 94 are joined by a disulfide bond.

The protein belongs to the HdeA family.

The protein resides in the periplasm. Required for optimal acid stress protection. Exhibits a chaperone-like activity only at low pH by suppressing non-specifically the aggregation of denaturated periplasmic proteins. Contributes to acid resistance. Not required for wild-type virulence in the BALB/c mouse model. The protein is Probable acid stress chaperone HdeA of Brucella abortus (strain 2308).